A 147-amino-acid chain; its full sequence is D-aminoacyl-tRNA deacylase (147 aa).

The short motif at 137 to 138 (GP) is the Gly-cisPro motif, important for rejection of L-amino acids element.

Belongs to the DTD family. As to quaternary structure, homodimer.

The protein resides in the cytoplasm. The catalysed reaction is glycyl-tRNA(Ala) + H2O = tRNA(Ala) + glycine + H(+). It carries out the reaction a D-aminoacyl-tRNA + H2O = a tRNA + a D-alpha-amino acid + H(+). In terms of biological role, an aminoacyl-tRNA editing enzyme that deacylates mischarged D-aminoacyl-tRNAs. Also deacylates mischarged glycyl-tRNA(Ala), protecting cells against glycine mischarging by AlaRS. Acts via tRNA-based rather than protein-based catalysis; rejects L-amino acids rather than detecting D-amino acids in the active site. By recycling D-aminoacyl-tRNA to D-amino acids and free tRNA molecules, this enzyme counteracts the toxicity associated with the formation of D-aminoacyl-tRNA entities in vivo and helps enforce protein L-homochirality. This Bacillus velezensis (strain DSM 23117 / BGSC 10A6 / LMG 26770 / FZB42) (Bacillus amyloliquefaciens subsp. plantarum) protein is D-aminoacyl-tRNA deacylase.